A 447-amino-acid polypeptide reads, in one-letter code: GTPase Der (447 aa).

2 EngA-type G domains span residues 4–165 and 180–357; these read KIIA…PEEE and LQIV…KIWN. GTP-binding positions include 10 to 17, 57 to 61, 119 to 122, 186 to 193, 233 to 237, and 298 to 301; these read GRPNVGKS, DTPGL, NKCE, GRPNAGKS, DTAGL, and NKWD. In terms of domain architecture, KH-like spans 358-443; sequence KKIATSKLNE…PIRFTYVKTK (86 aa).

This sequence belongs to the TRAFAC class TrmE-Era-EngA-EngB-Septin-like GTPase superfamily. EngA (Der) GTPase family. Associates with the 50S ribosomal subunit.

In terms of biological role, GTPase that plays an essential role in the late steps of ribosome biogenesis. This is GTPase Der from Rickettsia akari (strain Hartford).